The following is a 481-amino-acid chain: ATP synthase subunit beta, chloroplastic (481 aa).

162-169 serves as a coordination point for ATP; that stretch reads GGAGVGKT.

It belongs to the ATPase alpha/beta chains family. In terms of assembly, F-type ATPases have 2 components, CF(1) - the catalytic core - and CF(0) - the membrane proton channel. CF(1) has five subunits: alpha(3), beta(3), gamma(1), delta(1), epsilon(1). CF(0) has four main subunits: a(1), b(1), b'(1) and c(9-12).

Its subcellular location is the plastid. It is found in the chloroplast thylakoid membrane. The catalysed reaction is ATP + H2O + 4 H(+)(in) = ADP + phosphate + 5 H(+)(out). In terms of biological role, produces ATP from ADP in the presence of a proton gradient across the membrane. The catalytic sites are hosted primarily by the beta subunits. The chain is ATP synthase subunit beta, chloroplastic from Oltmannsiellopsis viridis (Marine flagellate).